A 134-amino-acid polypeptide reads, in one-letter code: Small ribosomal subunit protein bS6 (134 aa).

It belongs to the bacterial ribosomal protein bS6 family.

In terms of biological role, binds together with bS18 to 16S ribosomal RNA. This chain is Small ribosomal subunit protein bS6, found in Pelodictyon phaeoclathratiforme (strain DSM 5477 / BU-1).